Consider the following 224-residue polypeptide: UPF0758 protein IL0240 (224 aa).

Residues 102-224 (GFTEPTMVKD…PISFAERGLL (123 aa)) enclose the MPN domain. Zn(2+) is bound by residues His173, His175, and Asp186. The JAMM motif signature appears at 173–186 (HNHPSGVAEPSQAD).

It belongs to the UPF0758 family.

The sequence is that of UPF0758 protein IL0240 from Idiomarina loihiensis (strain ATCC BAA-735 / DSM 15497 / L2-TR).